The chain runs to 2210 residues: Orsellinic acid synthase ArmB (2210 aa).

Positions 38–261 are N-terminal acylcarrier protein transacylase domain (SAT); it reads LLLDACHYAF…HKTTVDALYH (224 aa). The region spanning 391 to 817 is the Ketosynthase family 3 (KS3) domain; it reads QEPIAICGMS…GSNGALLLEE (427 aa). Active-site for beta-ketoacyl synthase activity residues include Cys561, His696, and His736. The segment at 915–1240 is malonyl-CoA:ACP transacylase (MAT) domain; it reads VFVFSGQGGQ…GLTLSSSLSQ (326 aa). Ser1009 (for acyl/malonyl transferase activity) is an active-site residue. Residues 1307 to 1437 are N-terminal hotdog fold; that stretch reads MLQSWAQFPS…GQFRPLLVVD (131 aa). The PKS/mFAS DH domain maps to 1307 to 1614; that stretch reads MLQSWAQFPS…FKKLRLNTLQ (308 aa). Positions 1336 to 1611 are product template (PT) domain; the sequence is ITGHIVGDVP…GMCFKKLRLN (276 aa). His1339 functions as the Proton acceptor; for dehydratase activity in the catalytic mechanism. The tract at residues 1464-1614 is C-terminal hotdog fold; that stretch reads AEVFTTRTAY…FKKLRLNTLQ (151 aa). Catalysis depends on Asp1525, which acts as the Proton donor; for dehydratase activity. A Carrier 1 domain is found at 1660–1735; sequence VDVQNTVLNI…ELVREISSTV (76 aa). Position 1694 is an O-(pantetheine 4'-phosphoryl)serine (Ser1694). A disordered region spans residues 1739–1761; it reads AATAVNTPETASTPEPTLQGDAS. The Carrier 2 domain occupies 1845–1922; it reads SSPSSDLVDT…AVNQYISSKR (78 aa). At Ser1882 the chain carries O-(pantetheine 4'-phosphoryl)serine. A disordered region spans residues 1920–1946; sequence SKRPGKSPKQVEETAMDPDREEDLSDL. Acidic residues predominate over residues 1933-1944; it reads TAMDPDREEDLS. Positions 1963–2202 are thioesterase (TE) domain; sequence VPMSVQKSSS…LGAVTQALVD (240 aa).

It functions in the pathway secondary metabolite biosynthesis. In terms of biological role, non-reducing polyketide synthase, part of the gene cluster that mediates the biosynthesis of melleolides, a range of antifungal and phytotoxic polyketide derivatives composed of an orsellinic acid (OA) moiety esterified to various sesquiterpene alcohols. The first step in melleolides biosynthesis is performed by the delta(6)-protoilludene synthase PRO1 which catalyzes the cyclization of farnesyl diphosphate to protoilludene. The orsellinic acid synthase armB produces OA by condensing acetyl-CoA with 3 malonyl-CoA units in a three-round chain elongation reaction folowed by a C2-C7 ring closure. ArmB further catalyzes the trans-esterification of OA to the various sesquiterpene alcohols resulting from the hydroxylation of protoilludene. The melleolides cluster also includes 5 cytochrome P450 monooxygenases, 4 NAD(+)-dependent oxidoreductases, one flavin-dependent oxidoreductase, and one O-methyltransferase. The cytochrome P450 monooxygenases may be involved in protoilludene hydroxylation to elaborate melleolides with multiple alcohol groups, such as melleolide D, which carries alcohol functionalities at C-4, C-5, C-10, and C-13. The role of the NAD(+)-dependent enzymes remains unknown. Numerous melleolides, including arnamial, show 5'-O-methylation of the aromatic moiety which may be catalyzed by the methyltransferase encoded in the cluster. The flavin-dependent oxidoreductase might represent the dehydrogenase yielding the aldehyde in position 1 of arnamial and other melleolides. Finally, several halogenase localized outside of the cluster (armH1 to armH5), are able to catalyze the transfer of a single chlorine atom to the melleolide backbone, resulting in a 6'-chloromelleolide product. This chain is Orsellinic acid synthase ArmB, found in Armillaria ostoyae (Armillaria root rot fungus).